The sequence spans 1541 residues: ATP-binding cassette sub-family C member 2 (1541 aa).

Over 1–26 (MDKFCNSTFWDLSLLESPEADLPLCF) the chain is Extracellular. N6 carries N-linked (GlcNAc...) asparagine glycosylation. The helical transmembrane segment at 27–47 (EQTVLVWIPLGFLWLLAPWQL) threads the bilayer. Residues 48–67 (YSVYRSRTKRSSITKFYLAK) lie on the Cytoplasmic side of the membrane. The helical transmembrane segment at 68-88 (QVFVVFLLILAAIDLSLALTE) threads the bilayer. Residues 89-92 (DTGQ) are Extracellular-facing. A helical transmembrane segment spans residues 93-113 (ATVPPVRYTNPILYLCTWLLV). At 114 to 125 (LAVQHSRQWCVR) the chain is on the cytoplasmic side. A helical membrane pass occupies residues 126 to 146 (KNSWFLSLFWILSVLCGVFQF). At 147-164 (QTLIRALLKDSKSNMAYS) the chain is on the extracellular side. The chain crosses the membrane as a helical span at residues 165–185 (YLFFVSYGFQIVLLILTAFSG). Residues 186-309 (PSDSTQTPSV…DYPKSWLIKS (124 aa)) are Cytoplasmic-facing. 2 positions are modified to phosphoserine: S279 and S281. The chain crosses the membrane as a helical span at residues 310–330 (LFKTFHVVILKSFILKLIHDL). The ABC transmembrane type-1 1 domain occupies 318-601 (ILKSFILKLI…LPMVTSSILQ (284 aa)). At 331 to 356 (LVFLNPQLLKLLIGFVKSSNSYVWFG) the chain is on the extracellular side. The helical transmembrane segment at 357–377 (YICAILMFAVTLIQSFCLQSY) threads the bilayer. Over 378-433 (FQHCFVLGMCVRTTVMSSIYKKALTLSNLARKQYTIGETVNLMSVDSQKLMDATNY) the chain is Cytoplasmic. A helical membrane pass occupies residues 434 to 454 (MQLVWSSVIQITLSIFFLWRE). Over 455 to 457 (LGP) the chain is Extracellular. A helical transmembrane segment spans residues 458-478 (SILAGVGVMVLLIPVNGVLAT). The Cytoplasmic segment spans residues 479–540 (KIRNIQVQNM…NLLRFGQLQS (62 aa)). A helical membrane pass occupies residues 541-561 (LLIFILQITPILVSVVTFSVY). Over 562 to 583 (VLVDSANVLNAEKAFTSITLFN) the chain is Extracellular. A helical transmembrane segment spans residues 584–604 (ILRFPLSMLPMVTSSILQASV). The Cytoplasmic segment spans residues 605–967 (SVDRLERYLG…VKFSIYLKYL (363 aa)). Residues 633 to 857 (VKFSEASFTW…KGVFARNWKT (225 aa)) enclose the ABC transporter 1 domain. 667–674 (GTVGSGKS) serves as a coordination point for ATP. Disordered stretches follow at residues 862–881 (SGPEGEATVNNDSEAEDDDD) and 901–923 (RENSLRRTLSRSSRSSSRRGKSL). S874 carries the phosphoserine modification. Positions 906–915 (RRTLSRSSRS) are enriched in low complexity. Phosphoserine is present on residues S922 and S926. Residues 968–988 (QAVGWWSILFIILFYGLNNVA) form a helical membrane-spanning segment. Residues 975 to 1260 (ILFIILFYGL…LVRMTSEAET (286 aa)) form the ABC transmembrane type-1 2 domain. Residues 989–1029 (FIGSNLWLSAWTSDSDNLNGTNNSSSHRDMRIGVFGALGLA) lie on the Extracellular side of the membrane. N-linked (GlcNAc...) asparagine glycans are attached at residues N1007, N1010, and N1011. The helical transmembrane segment at 1030–1050 (QGICLLISTLWSIYACRNASK) threads the bilayer. The Cytoplasmic segment spans residues 1051-1093 (ALHGQLLTNILRAPMRFFDTTPTGRIVNRFSGDISTVDDLLPQ). Residues 1094–1114 (TLRSWMMCFFGIAGTLVMICM) traverse the membrane as a helical segment. A1115 is a topological domain (extracellular). The chain crosses the membrane as a helical span at residues 1116–1136 (TPVFAIIIIPLSILYISVQVF). The Cytoplasmic segment spans residues 1137 to 1207 (YVATSRQLRR…TSNRWLAIRL (71 aa)). Residues 1208 to 1228 (ELVGNLVVFCSALLLVIYRKT) form a helical membrane-spanning segment. The Extracellular segment spans residues 1229 to 1230 (LT). A helical transmembrane segment spans residues 1231 to 1251 (GDVVGFVLSNALNITQTLNWL). Over 1252–1541 (VRMTSEAETN…GIENVNHTEL (290 aa)) the chain is Cytoplasmic. The ABC transporter 2 domain occupies 1296 to 1530 (IQFNNYQVRY…RGSFYLMAKE (235 aa)). 1330 to 1337 (GRTGAGKS) is a binding site for ATP. Residue S1434 is modified to Phosphoserine.

It belongs to the ABC transporter superfamily. ABCC family. Conjugate transporter (TC 3.A.1.208) subfamily. Mainly expressed in the liver.

Its subcellular location is the apical cell membrane. The catalysed reaction is an S-substituted glutathione(in) + ATP + H2O = an S-substituted glutathione(out) + ADP + phosphate + H(+). It carries out the reaction taurolithocholate 3-sulfate(in) + ATP + H2O = taurolithocholate 3-sulfate(out) + ADP + phosphate + H(+). The enzyme catalyses ATP + H2O + xenobioticSide 1 = ADP + phosphate + xenobioticSide 2.. It catalyses the reaction 17beta-estradiol 17-O-(beta-D-glucuronate)(in) + ATP + H2O = 17beta-estradiol 17-O-(beta-D-glucuronate)(out) + ADP + phosphate + H(+). The catalysed reaction is leukotriene C4(in) + ATP + H2O = leukotriene C4(out) + ADP + phosphate + H(+). It carries out the reaction (4Z,15Z)-bilirubin IXalpha C8-beta-D-glucuronoside(in) + ATP + H2O = (4Z,15Z)-bilirubin IXalpha C8-beta-D-glucuronoside(out) + ADP + phosphate + H(+). The enzyme catalyses (4Z,15Z)-bilirubin IXalpha C8,C12-beta-D-bisglucuronoside(in) + ATP + H2O = (4Z,15Z)-bilirubin IXalpha C8,C12-beta-D-bisglucuronoside(out) + ADP + phosphate + H(+). ATP-dependent transporter of the ATP-binding cassette (ABC) family that binds and hydrolyzes ATP to enable active transport of various substrates including many drugs, toxicants and endogenous compound across cell membranes. Transports a wide variety of conjugated organic anions such as sulfate-, glucuronide- and glutathione (GSH)-conjugates of endo- and xenobiotics substrates. Mediates hepatobiliary excretion of mono- and bis-glucuronidated bilirubin molecules and therefore play an important role in bilirubin detoxification. Also mediates hepatobiliary excretion of others glucuronide conjugates such as 17beta-estradiol 17-glucosiduronic acid and leukotriene C4. Transports sulfated bile salt such as taurolithocholate sulfate. Transports various anticancer drugs, such as anthracycline, vinca alkaloid and methotrexate and HIV-drugs such as protease inhibitors. The chain is ATP-binding cassette sub-family C member 2 from Rattus norvegicus (Rat).